The chain runs to 234 residues: Pepsin inhibitor Dit33 (234 aa).

Residues 1-17 (MKILFCFVLLAIAALRA) form the signal peptide. Cysteine 135 and cysteine 230 are joined by a disulfide. The interval 200-222 (RHETSSQPSDATTISTTTQAPVE) is disordered. The segment covering 204 to 219 (SSQPSDATTISTTTQA) has biased composition (polar residues).

It belongs to the protease inhibitor I33 family.

The protein resides in the secreted. Functionally, aspartyl protease inhibitor. In Dirofilaria immitis (Canine heartworm), this protein is Pepsin inhibitor Dit33 (DIT33).